Consider the following 770-residue polypeptide: Lysine-specific histone demethylase 1 (770 aa).

Positions M1 to P21 are disordered. In terms of domain architecture, SWIRM spans L28–I126. Residue V137–A165 participates in FAD binding. Residues N718–I739 form a disordered region.

Belongs to the flavin monoamine oxidase family. As to quaternary structure, probably part of a large repressor complex. Interacts with CoREST protein spr-1. Interacts with chromobox protein homolog hpl-1. FAD is required as a cofactor.

It localises to the nucleus. It catalyses the reaction N(6),N(6)-dimethyl-L-lysyl(4)-[histone H3] + 2 A + 2 H2O = L-lysyl(4)-[histone H3] + 2 formaldehyde + 2 AH2. Its function is as follows. Histone demethylase that specifically demethylates 'Lys-4' of histone H3, a specific tag for epigenetic transcriptional activation, thereby acting as a corepressor. Acts by oxidizing the substrate by FAD to generate the corresponding imine that is subsequently hydrolyzed. Demethylates both mono- and di-methylated 'Lys-4' of histone H3. May be involved in H3 demethylation in mitotic cells including gut and embryonic cells. Participates in the transcriptional repression of the presenilin protein hop-1. May act via the formation of a multiprotein complex that remodel or modify the chromatin. Together with met-2, set-17 and set-26, required for transgenerational fertility. Plays a role in developmental growth and lifespan regulation in response to ultraviolet-induced damage. The sequence is that of Lysine-specific histone demethylase 1 from Caenorhabditis elegans.